The primary structure comprises 180 residues: Ribulose bisphosphate carboxylase small subunit, chloroplastic 1 (180 aa).

The N-terminal 56 residues, 1–56 (MASSVISSAAVATRTNVAQASMVAPFNGLKSAVSFPVSSKQNLDITSIASNGGRVQ), are a transit peptide targeting the chloroplast.

Belongs to the RuBisCO small chain family. In terms of assembly, heterohexadecamer of 8 large and 8 small subunits.

It is found in the plastid. The protein resides in the chloroplast. In terms of biological role, ruBisCO catalyzes two reactions: the carboxylation of D-ribulose 1,5-bisphosphate, the primary event in carbon dioxide fixation, as well as the oxidative fragmentation of the pentose substrate. Both reactions occur simultaneously and in competition at the same active site. Although the small subunit is not catalytic it is essential for maximal activity. The protein is Ribulose bisphosphate carboxylase small subunit, chloroplastic 1 of Petunia hybrida (Petunia).